A 578-amino-acid polypeptide reads, in one-letter code: Acyl-CoA ligase AFT1-1 (578 aa).

ATP-binding positions include 210 to 218, 350 to 355, aspartate 438, arginine 457, and lysine 554; these read SSGTSGAQK and QCYGAT. The SBD1 stretch occupies residues 281–350; it reads GVEDLLSIVE…RHHPTWKIKQ (70 aa). The SBD2 stretch occupies residues 351–413; that stretch reads CYGATEAGTA…VSSPSLAIGY (63 aa). The Peroxisomal targeting signal type 1 motif lies at 576-578; sequence SKI.

This sequence belongs to the ATP-dependent AMP-binding enzyme family.

It localises to the peroxisome. Its pathway is mycotoxin biosynthesis. Its function is as follows. Acyl-CoA ligase; part of the gene clusters that mediate the biosynthesis of the host-selective toxins (HSTs) AF-toxins responsible for Alternaria black spot of strawberry disease by the strawberry pathotype. AF-toxin I and III are valine derivatives of 2,3-dyhydroxy-isovaleric acid and 2-hydroxy-isovaleric acid respectively, while AF II is an isoleucine derivative of 2-hydroxy-valeric acid. These derivatives are bound to a 9,10-epoxy-8-hydroxy-9-methyl-decatrienoic acid (EDA) moiety. On cellular level, AF-toxins affect plasma membrane of susceptible cells and cause a sudden increase in loss of K(+) after a few minutes of toxin treatment. The aldo-keto reductase AFTS1 catalyzes the conversion of 2-keto-isovaleric acid (2-KIV) to 2-hydroxy-isovaleric acid (2-HIV) by reduction of its ketone to an alcohol. The acyl-CoA ligase AFT1, the hydrolase AFT2 and the enoyl-CoA hydratases AFT3 and AFT6, but also the polyketide synthase AFT9, the acyl-CoA dehydrogenase AFT10, the cytochrome P450 monooxygenase AFT11 and the oxidoreductase AFT12 are all involved in the biosynthesis of the AK-, AF- and ACT-toxin common EDA structural moiety. The exact role of each enzyme, and of additional enzymes identified within the AF-toxin clusters have still to be determined. The chain is Acyl-CoA ligase AFT1-1 from Alternaria alternata (Alternaria rot fungus).